Consider the following 290-residue polypeptide: 33 kDa chaperonin (290 aa).

Cystine bridges form between Cys235/Cys237 and Cys268/Cys271.

This sequence belongs to the HSP33 family. In terms of processing, under oxidizing conditions two disulfide bonds are formed involving the reactive cysteines. Under reducing conditions zinc is bound to the reactive cysteines and the protein is inactive.

The protein localises to the cytoplasm. In terms of biological role, redox regulated molecular chaperone. Protects both thermally unfolding and oxidatively damaged proteins from irreversible aggregation. Plays an important role in the bacterial defense system toward oxidative stress. The protein is 33 kDa chaperonin of Streptococcus pneumoniae (strain P1031).